A 204-amino-acid polypeptide reads, in one-letter code: FMN-dependent NADH:quinone oxidoreductase (204 aa).

Residues serine 9 and serine 15–serine 17 contribute to the FMN site.

The protein belongs to the azoreductase type 1 family. Homodimer. Requires FMN as cofactor.

It carries out the reaction 2 a quinone + NADH + H(+) = 2 a 1,4-benzosemiquinone + NAD(+). It catalyses the reaction N,N-dimethyl-1,4-phenylenediamine + anthranilate + 2 NAD(+) = 2-(4-dimethylaminophenyl)diazenylbenzoate + 2 NADH + 2 H(+). In terms of biological role, quinone reductase that provides resistance to thiol-specific stress caused by electrophilic quinones. Functionally, also exhibits azoreductase activity. Catalyzes the reductive cleavage of the azo bond in aromatic azo compounds to the corresponding amines. The chain is FMN-dependent NADH:quinone oxidoreductase from Xanthomonas campestris pv. campestris (strain ATCC 33913 / DSM 3586 / NCPPB 528 / LMG 568 / P 25).